We begin with the raw amino-acid sequence, 193 residues long: Protein GrpE (193 aa).

The segment at 1-40 (MTEENRPQPDQPELTVTSESSVQETGENKARTPEQEGEAM) is disordered. Over residues 14 to 25 (LTVTSESSVQET) the composition is skewed to polar residues.

The protein belongs to the GrpE family. As to quaternary structure, homodimer.

The protein resides in the cytoplasm. Its function is as follows. Participates actively in the response to hyperosmotic and heat shock by preventing the aggregation of stress-denatured proteins, in association with DnaK and GrpE. It is the nucleotide exchange factor for DnaK and may function as a thermosensor. Unfolded proteins bind initially to DnaJ; upon interaction with the DnaJ-bound protein, DnaK hydrolyzes its bound ATP, resulting in the formation of a stable complex. GrpE releases ADP from DnaK; ATP binding to DnaK triggers the release of the substrate protein, thus completing the reaction cycle. Several rounds of ATP-dependent interactions between DnaJ, DnaK and GrpE are required for fully efficient folding. The polypeptide is Protein GrpE (Nitrosospira multiformis (strain ATCC 25196 / NCIMB 11849 / C 71)).